The sequence spans 443 residues: Putative cytochrome bd menaquinol oxidase subunit I (443 aa).

9 helical membrane-spanning segments follow: residues 19-39, 60-80, 93-113, 125-145, 176-196, 219-239, 322-342, 357-377, and 405-425; these read IIFA…ELIY, VLLG…ALLW, LPFQ…SIYV, IVAV…ITNV, FFIT…FIVA, ALLL…LNGH, LFNA…IGVV, LIIF…GWIF, and VLFL…VYVL. H182 contacts heme b.

Belongs to the cytochrome ubiquinol oxidase subunit 1 family. Heme b is required as a cofactor.

Its subcellular location is the cell membrane. Functionally, may have a role in sporulation. Can compensate for the loss of cytochrome aa3. This chain is Putative cytochrome bd menaquinol oxidase subunit I (ythA), found in Bacillus subtilis (strain 168).